We begin with the raw amino-acid sequence, 435 residues long: Serine--tRNA ligase (435 aa).

L-serine is bound at residue 234 to 236 (TAE). 265–267 (RRE) contributes to the ATP binding site. Glutamate 288 lines the L-serine pocket. 352-355 (EISS) provides a ligand contact to ATP. An L-serine-binding site is contributed by serine 388.

It belongs to the class-II aminoacyl-tRNA synthetase family. Type-1 seryl-tRNA synthetase subfamily. Homodimer. The tRNA molecule binds across the dimer.

It localises to the cytoplasm. It carries out the reaction tRNA(Ser) + L-serine + ATP = L-seryl-tRNA(Ser) + AMP + diphosphate + H(+). The enzyme catalyses tRNA(Sec) + L-serine + ATP = L-seryl-tRNA(Sec) + AMP + diphosphate + H(+). Its pathway is aminoacyl-tRNA biosynthesis; selenocysteinyl-tRNA(Sec) biosynthesis; L-seryl-tRNA(Sec) from L-serine and tRNA(Sec): step 1/1. Catalyzes the attachment of serine to tRNA(Ser). Is also able to aminoacylate tRNA(Sec) with serine, to form the misacylated tRNA L-seryl-tRNA(Sec), which will be further converted into selenocysteinyl-tRNA(Sec). The sequence is that of Serine--tRNA ligase from Synechococcus sp. (strain JA-2-3B'a(2-13)) (Cyanobacteria bacterium Yellowstone B-Prime).